The sequence spans 603 residues: Adenine deaminase (603 aa).

It belongs to the metallo-dependent hydrolases superfamily. Adenine deaminase family. As to quaternary structure, homodimer. Mn(2+) is required as a cofactor.

The catalysed reaction is adenine + H2O + H(+) = hypoxanthine + NH4(+). This chain is Adenine deaminase, found in Klebsiella pneumoniae (strain 342).